The primary structure comprises 192 residues: NF-kappa-B inhibitor-interacting Ras-like protein 1 (192 aa).

Positions 1 to 192 are small GTPase-like; it reads MGKGCKVVVC…KSKGTPSNDI (192 aa). 11-18 is a GTP binding site; sequence GMASVGKT. An Effector region motif is present at residues 35 to 43; sequence TSDTQEDIY. Residues 61-65 and 120-123 contribute to the GTP site; these read DTRGL and NKCE. The segment at 169–192 is disordered; that stretch reads TQPQSKSAFPLPGRKSKGTPSNDI.

This sequence belongs to the small GTPase superfamily. Ras family. KappaB-Ras subfamily.

Its subcellular location is the cytoplasm. Functionally, atypical Ras-like protein that acts as a potent regulator of NF-kappa-B activity by preventing the degradation of NF-kappa-B inhibitor beta (NFKBIB) by most signals, explaining why NFKBIB is more resistant to degradation. The protein is NF-kappa-B inhibitor-interacting Ras-like protein 1 (nkiras1) of Danio rerio (Zebrafish).